The chain runs to 284 residues: Ribosomal RNA small subunit methyltransferase A (284 aa).

Residues N26, L28, G53, E74, D97, and N127 each coordinate S-adenosyl-L-methionine.

This sequence belongs to the class I-like SAM-binding methyltransferase superfamily. rRNA adenine N(6)-methyltransferase family. RsmA subfamily.

The protein resides in the cytoplasm. It catalyses the reaction adenosine(1518)/adenosine(1519) in 16S rRNA + 4 S-adenosyl-L-methionine = N(6)-dimethyladenosine(1518)/N(6)-dimethyladenosine(1519) in 16S rRNA + 4 S-adenosyl-L-homocysteine + 4 H(+). Functionally, specifically dimethylates two adjacent adenosines (A1518 and A1519) in the loop of a conserved hairpin near the 3'-end of 16S rRNA in the 30S particle. May play a critical role in biogenesis of 30S subunits. This is Ribosomal RNA small subunit methyltransferase A from Anaeromyxobacter dehalogenans (strain 2CP-C).